Consider the following 307-residue polypeptide: MTAHRSVLLVVHTGRDEATETARRVEKVLGDNKIALRVLSAEAVDRGSLHLAPDDMRAMGVEIEVVDADQHAADGCELVLVLGGDGTFLRAAELARNASIPVLGVNLGRIGFLAEAEAEAIDAVLEHVVAQDYRVEDRLTLDVVVRQGGRIVNRGWALNEVSLEKGPRLGVLGVVVEIDGRPVSAFGCDGVLVSTPTGSTAYAFSAGGPVLWPDLEAILVVPNNAHALFGRPMVTSPEATIAIEIEADGHDALVFCDGRREMLIPAGSRLEVTRCVTSVKWARLDSAPFTDRLVRKFRLPVTGWRGK.

Residue Asp-85 is the Proton acceptor of the active site. NAD(+) is bound by residues 85–86 (DG), Arg-90, 159–160 (NE), Asp-189, and 200–205 (TAYAFS).

The protein belongs to the NAD kinase family. Requires a divalent metal cation as cofactor.

It localises to the cytoplasm. The enzyme catalyses NAD(+) + ATP = ADP + NADP(+) + H(+). Functionally, involved in the regulation of the intracellular balance of NAD and NADP, and is a key enzyme in the biosynthesis of NADP. Catalyzes specifically the phosphorylation on 2'-hydroxyl of the adenosine moiety of NAD to yield NADP. The polypeptide is NAD kinase (Mycobacterium bovis (strain ATCC BAA-935 / AF2122/97)).